Reading from the N-terminus, the 119-residue chain is Large ribosomal subunit protein bL19 (119 aa).

This sequence belongs to the bacterial ribosomal protein bL19 family.

This protein is located at the 30S-50S ribosomal subunit interface and may play a role in the structure and function of the aminoacyl-tRNA binding site. This chain is Large ribosomal subunit protein bL19, found in Leuconostoc mesenteroides subsp. mesenteroides (strain ATCC 8293 / DSM 20343 / BCRC 11652 / CCM 1803 / JCM 6124 / NCDO 523 / NBRC 100496 / NCIMB 8023 / NCTC 12954 / NRRL B-1118 / 37Y).